The sequence spans 449 residues: Procollagen C-endopeptidase enhancer 1 (449 aa).

The N-terminal stretch at 1 to 25 (MLPAATASLLGPLLTACALLPFAQG) is a signal peptide. An N-linked (GlcNAc...) asparagine glycan is attached at Asn29. Disulfide bonds link Cys37/Cys63, Cys90/Cys112, Cys159/Cys186, Cys213/Cys236, Cys318/Cys386, Cys322/Cys389, and Cys333/Cys437. CUB domains follow at residues 37-149 (CGGD…YSGR) and 159-273 (CGGR…YKTL). The residue at position 50 (Ser50) is a Phosphoserine. Residues 271–321 (KTLPRGTAKEGQGPGPKRGTEPKVKLPPKSQPPEKTEESPSAPDAPTCPKQ) are disordered. Residues 318 to 437 (CPKQCRRTGT…ILTNLSKRKC (120 aa)) enclose the NTR domain. Residue Asn431 is glycosylated (N-linked (GlcNAc...) asparagine).

As to quaternary structure, interacts with EFEMP2. Post-translationally, C-terminally processed at multiple positions.

Its subcellular location is the secreted. Binds to the C-terminal propeptide of type I procollagen and enhances procollagen C-proteinase activity. In terms of biological role, C-terminal processed part of PCPE (CT-PCPE) may have an metalloproteinase inhibitory activity. The chain is Procollagen C-endopeptidase enhancer 1 (PCOLCE) from Homo sapiens (Human).